A 36-amino-acid chain; its full sequence is Photosystem I reaction center subunit VIII (36 aa).

The chain crosses the membrane as a helical span at residues 8 to 28 (SVLVPLVGLVFPAIAMASLFL).

This sequence belongs to the PsaI family.

The protein resides in the plastid. Its subcellular location is the chloroplast thylakoid membrane. In terms of biological role, may help in the organization of the PsaL subunit. This Helianthus annuus (Common sunflower) protein is Photosystem I reaction center subunit VIII.